The chain runs to 129 residues: UPF0225 protein XOO0258 (129 aa).

Belongs to the UPF0225 family.

The chain is UPF0225 protein XOO0258 from Xanthomonas oryzae pv. oryzae (strain MAFF 311018).